The following is a 51-amino-acid chain: AANQHLCGSHLVEALYLVCGERGFFYSPKTGIVEQCCENPCSLYQLENYCN.

3 cysteine pairs are disulfide-bonded: Cys7/Cys37, Cys19/Cys50, and Cys36/Cys41.

Belongs to the insulin family. In terms of assembly, heterodimer of a B chain and an A chain linked by two disulfide bonds.

The protein resides in the secreted. Insulin decreases blood glucose concentration. It increases cell permeability to monosaccharides, amino acids and fatty acids. It accelerates glycolysis, the pentose phosphate cycle, and glycogen synthesis in liver. The polypeptide is Insulin (INS) (Anser anser anser (Western greylag goose)).